A 317-amino-acid chain; its full sequence is Aspartate carbamoyltransferase catalytic subunit (317 aa).

Arg-66 and Thr-67 together coordinate carbamoyl phosphate. Lys-94 is an L-aspartate binding site. The carbamoyl phosphate site is built by Arg-116, His-144, and Gln-147. Positions 177 and 231 each coordinate L-aspartate. Carbamoyl phosphate is bound by residues Gly-272 and Pro-273.

This sequence belongs to the aspartate/ornithine carbamoyltransferase superfamily. ATCase family. Heterododecamer (2C3:3R2) of six catalytic PyrB chains organized as two trimers (C3), and six regulatory PyrI chains organized as three dimers (R2).

The catalysed reaction is carbamoyl phosphate + L-aspartate = N-carbamoyl-L-aspartate + phosphate + H(+). Its pathway is pyrimidine metabolism; UMP biosynthesis via de novo pathway; (S)-dihydroorotate from bicarbonate: step 2/3. Its function is as follows. Catalyzes the condensation of carbamoyl phosphate and aspartate to form carbamoyl aspartate and inorganic phosphate, the committed step in the de novo pyrimidine nucleotide biosynthesis pathway. The chain is Aspartate carbamoyltransferase catalytic subunit from Beijerinckia indica subsp. indica (strain ATCC 9039 / DSM 1715 / NCIMB 8712).